A 338-amino-acid chain; its full sequence is Eukaryotic translation initiation factor 3 subunit H (338 aa).

Positions 22–154 (VQCDGLAVMK…LKAYRLTPQA (133 aa)) constitute an MPN domain.

The protein belongs to the eIF-3 subunit H family. In terms of assembly, component of the eukaryotic translation initiation factor 3 (eIF-3) complex. The eIF-3 complex interacts with pix. Interacts with mxt.

The protein resides in the cytoplasm. In terms of biological role, component of the eukaryotic translation initiation factor 3 (eIF-3) complex, which is involved in protein synthesis of a specialized repertoire of mRNAs and, together with other initiation factors, stimulates binding of mRNA and methionyl-tRNAi to the 40S ribosome. The eIF-3 complex specifically targets and initiates translation of a subset of mRNAs involved in cell proliferation. The protein is Eukaryotic translation initiation factor 3 subunit H of Drosophila melanogaster (Fruit fly).